A 292-amino-acid chain; its full sequence is Ribosomal protein L11 methyltransferase (292 aa).

S-adenosyl-L-methionine is bound by residues threonine 136, glycine 159, aspartate 181, and asparagine 228.

Belongs to the methyltransferase superfamily. PrmA family.

It is found in the cytoplasm. It carries out the reaction L-lysyl-[protein] + 3 S-adenosyl-L-methionine = N(6),N(6),N(6)-trimethyl-L-lysyl-[protein] + 3 S-adenosyl-L-homocysteine + 3 H(+). In terms of biological role, methylates ribosomal protein L11. The polypeptide is Ribosomal protein L11 methyltransferase (Rhizobium leguminosarum bv. trifolii (strain WSM2304)).